The sequence spans 179 residues: Large ribosomal subunit protein uL6 (179 aa).

The protein belongs to the universal ribosomal protein uL6 family. As to quaternary structure, part of the 50S ribosomal subunit.

In terms of biological role, this protein binds to the 23S rRNA, and is important in its secondary structure. It is located near the subunit interface in the base of the L7/L12 stalk, and near the tRNA binding site of the peptidyltransferase center. The sequence is that of Large ribosomal subunit protein uL6 from Treponema pallidum (strain Nichols).